Consider the following 405-residue polypeptide: Deoxyguanosinetriphosphate triphosphohydrolase-like protein (405 aa).

An HD domain is found at 75–219; that stretch reads RLTHTIEVAQ…AAIADDIAYN (145 aa).

Belongs to the dGTPase family. Type 2 subfamily.

In Agrobacterium fabrum (strain C58 / ATCC 33970) (Agrobacterium tumefaciens (strain C58)), this protein is Deoxyguanosinetriphosphate triphosphohydrolase-like protein.